We begin with the raw amino-acid sequence, 273 residues long: Ribosomal RNA small subunit methyltransferase A (273 aa).

N18, L20, G45, E66, D91, and N113 together coordinate S-adenosyl-L-methionine.

Belongs to the class I-like SAM-binding methyltransferase superfamily. rRNA adenine N(6)-methyltransferase family. RsmA subfamily.

Its subcellular location is the cytoplasm. The catalysed reaction is adenosine(1518)/adenosine(1519) in 16S rRNA + 4 S-adenosyl-L-methionine = N(6)-dimethyladenosine(1518)/N(6)-dimethyladenosine(1519) in 16S rRNA + 4 S-adenosyl-L-homocysteine + 4 H(+). Specifically dimethylates two adjacent adenosines (A1518 and A1519) in the loop of a conserved hairpin near the 3'-end of 16S rRNA in the 30S particle. May play a critical role in biogenesis of 30S subunits. This Salmonella schwarzengrund (strain CVM19633) protein is Ribosomal RNA small subunit methyltransferase A.